Here is a 1109-residue protein sequence, read N- to C-terminus: Cation channel sperm-associated auxiliary subunit beta (1109 aa).

The Extracellular segment spans residues 1–1055; that stretch reads MESPLIYVML…QIYVDEVPLP (1055 aa). C35 and C60 are oxidised to a cystine. Residues N66, N90, and N118 are each glycosylated (N-linked (GlcNAc...) asparagine). C189 and C302 are oxidised to a cystine. A glycan (N-linked (GlcNAc...) asparagine) is linked at N321. An intrachain disulfide couples C330 to C343. The N-linked (GlcNAc...) asparagine glycan is linked to N672. Cystine bridges form between C720-C818, C831-C1039, C913-C922, and C924-C939. N915 and N923 each carry an N-linked (GlcNAc...) asparagine glycan. The N-linked (GlcNAc...) asparagine glycan is linked to N1017. Residues 1056 to 1078 traverse the membrane as a helical segment; it reads FPGHALIAVATSVVLGVLIFIAF. Residues 1079–1109 are Cytoplasmic-facing; sequence VFQLRNIHPLKALKKSIRGNPGLTSSTTVSS.

Component of the CatSper complex or CatSpermasome composed of the core pore-forming members CATSPER1, CATSPER2, CATSPER3 and CATSPER4 as well as auxiliary members CATSPERB, CATSPERG2, CATSPERD, CATSPERE, CATSPERZ, C2CD6/CATSPERT, SLCO6C1, TMEM249, TMEM262 and EFCAB9. HSPA1 may be an additional auxiliary complex member. The core complex members CATSPER1, CATSPER2, CATSPER3 and CATSPER4 form a heterotetrameric channel. The auxiliary CATSPERB, CATSPERG2, CATSPERD and CATSPERE subunits form a pavilion-like structure over the pore which stabilizes the complex through interactions with CATSPER4, CATSPER3, CATSPER1 and CATSPER2 respectively. SLCO6C1 interacts with CATSPERE and TMEM262/CATSPERH interacts with CATSPERB, further stabilizing the complex. C2CD6/CATSPERT interacts at least with CATSPERD and is required for targeting the CatSper complex in the flagellar membrane. As to expression, testis-specific. Specifically present in the principal piece of sperm tail (at protein level). Specifically expressed in the seminiferous tubules but not in the interstitial cells. Within the tubules, it is expressed in spermatocytes and spermatids, but not in spermatogonia.

The protein resides in the cell projection. Its subcellular location is the cilium. The protein localises to the flagellum membrane. Its function is as follows. Auxiliary component of the CatSper complex, a complex involved in sperm cell hyperactivation. Sperm cell hyperactivation is needed for sperm motility which is essential late in the preparation of sperm for fertilization. The protein is Cation channel sperm-associated auxiliary subunit beta of Mus musculus (Mouse).